A 330-amino-acid polypeptide reads, in one-letter code: Putative protein DDB_G0285185 (330 aa).

A disordered region spans residues 212 to 240; sequence NKLQNQVQSSPKLSSPITKNKEQIVSTTS. Polar residues predominate over residues 214–240; it reads LQNQVQSSPKLSSPITKNKEQIVSTTS.

This Dictyostelium discoideum (Social amoeba) protein is Putative protein DDB_G0285185.